The chain runs to 102 residues: DET1- and DDB1-associated protein 1 (102 aa).

The disordered stretch occupies residues 67–102; sequence NAAKKRDQEQVEIEGENSAPPRKIARTDSQDMNEDT.

Belongs to the DDA1 family. As to quaternary structure, component of numerous DCX (DDB1-CUL4-X-box) E3 ubiquitin-protein ligase complexes which consist of a core of DDB1, cullin-4 (CUL4A or CUL4B), DDA1 and RBX1.

It participates in protein modification; protein ubiquitination. Functionally, functions as a component of numerous distinct DCX (DDB1-CUL4-X-box) E3 ubiquitin-protein ligase complexes which mediate the ubiquitination and subsequent proteasomal degradation of target proteins. In the DCX complexes, acts as a scaffolding subunit required to stabilize the complex. The sequence is that of DET1- and DDB1-associated protein 1 from Gallus gallus (Chicken).